We begin with the raw amino-acid sequence, 798 residues long: Phenylalanine--tRNA ligase beta subunit (798 aa).

Residues 39–148 (GKDLDNVVIG…EDAPIGTEYR (110 aa)) form the tRNA-binding domain. The 77-residue stretch at 401 to 477 (PQRAEISLNL…RMYGFDNIEA (77 aa)) folds into the B5 domain. Aspartate 455, aspartate 461, glutamate 464, and glutamate 465 together coordinate Mg(2+). An FDX-ACB domain is found at 705–797 (SKYPEVLRDL…IKDKYNGEIR (93 aa)).

It belongs to the phenylalanyl-tRNA synthetase beta subunit family. Type 1 subfamily. In terms of assembly, tetramer of two alpha and two beta subunits. Requires Mg(2+) as cofactor.

The protein localises to the cytoplasm. The enzyme catalyses tRNA(Phe) + L-phenylalanine + ATP = L-phenylalanyl-tRNA(Phe) + AMP + diphosphate + H(+). This is Phenylalanine--tRNA ligase beta subunit from Fusobacterium nucleatum subsp. nucleatum (strain ATCC 25586 / DSM 15643 / BCRC 10681 / CIP 101130 / JCM 8532 / KCTC 2640 / LMG 13131 / VPI 4355).